Reading from the N-terminus, the 860-residue chain is Leucine--tRNA ligase (860 aa).

Residues 42 to 52 (PYPSGRLHMGH) carry the 'HIGH' region motif. The 'KMSKS' region signature appears at 619-623 (KMSKS). Residue Lys-622 coordinates ATP.

It belongs to the class-I aminoacyl-tRNA synthetase family.

The protein resides in the cytoplasm. It carries out the reaction tRNA(Leu) + L-leucine + ATP = L-leucyl-tRNA(Leu) + AMP + diphosphate. In Cronobacter sakazakii (strain ATCC BAA-894) (Enterobacter sakazakii), this protein is Leucine--tRNA ligase.